Consider the following 253-residue polypeptide: Phosphoribosylaminoimidazole-succinocarboxamide synthase (253 aa).

This sequence belongs to the SAICAR synthetase family.

The catalysed reaction is 5-amino-1-(5-phospho-D-ribosyl)imidazole-4-carboxylate + L-aspartate + ATP = (2S)-2-[5-amino-1-(5-phospho-beta-D-ribosyl)imidazole-4-carboxamido]succinate + ADP + phosphate + 2 H(+). The protein operates within purine metabolism; IMP biosynthesis via de novo pathway; 5-amino-1-(5-phospho-D-ribosyl)imidazole-4-carboxamide from 5-amino-1-(5-phospho-D-ribosyl)imidazole-4-carboxylate: step 1/2. The chain is Phosphoribosylaminoimidazole-succinocarboxamide synthase from Roseobacter denitrificans (strain ATCC 33942 / OCh 114) (Erythrobacter sp. (strain OCh 114)).